The chain runs to 639 residues: Probable potassium transport system protein Kup 1 (639 aa).

12 consecutive transmembrane segments (helical) span residues 27–47 (AILGSIGVVYGDIGTSPLYAF), 64–84 (VIGLTSLMIWSLTIIVTFKYI), 115–135 (VLIVLGLIGAALFLGDAMITP), 151–171 (PAMDDFIIPISVCILIGLFAI), 182–202 (FFGPITAVWFLVMGGAGLIHI), 225–245 (GFYGVVVLGAVFLTITGAEAL), 261–281 (WFCLVFPALTLNYLGQGALVL), 293–313 (LMFPQWAILPAVILATAATII), 351–371 (IYLPAVNTILLFGVVALVLTF), 377–397 (LATAYGISVTGAMVVTSLMFF), 408–428 (IWLALAVLTPLLLLELIFLGA), and 430–450 (LLKIHDGGYVPVLLAIAFTVI).

It belongs to the HAK/KUP transporter (TC 2.A.72) family.

It is found in the cell inner membrane. The catalysed reaction is K(+)(in) + H(+)(in) = K(+)(out) + H(+)(out). Transport of potassium into the cell. Likely operates as a K(+):H(+) symporter. This Agrobacterium fabrum (strain C58 / ATCC 33970) (Agrobacterium tumefaciens (strain C58)) protein is Probable potassium transport system protein Kup 1.